Reading from the N-terminus, the 372-residue chain is Tomoregulin-1 (372 aa).

Positions 1-36 (MGAQAPLRLPAAPPLAVCGYTSVLLLFAFCLPGSRA) are cleaved as a signal peptide. Topologically, residues 37 to 322 (SNQPAGGGGD…VPSRQKLTHV (286 aa)) are extracellular. N55 carries an N-linked (GlcNAc...) asparagine glycan. The 48-residue stretch at 90–137 (ACQFQCHTNYIPVCGSNGDTYQNECFLRRAACKHQKDITVVARGPCYS) folds into the Kazal-like 1 domain. Cystine bridges form between C91–C121, C95–C114, and C103–C135. N139 carries N-linked (GlcNAc...) asparagine glycosylation. A disordered region spans residues 139-161 (NGSGSGEGEEEGSGAGAHRKHSK). Residues 181–229 (VCNIDCSGYSFNPVCASDGSSYNNPCFVREASCIKQEQIDIRHLGHCTD) form the Kazal-like 2 domain. Disulfide bonds link C182–C213, C186–C206, C195–C227, C267–C280, C275–C291, and C293–C302. The region spanning 263–303 (SHMPCPENLNGYCIHGKCEFIYSTQKASCRCESGYTGQHCE) is the EGF-like domain. Residues 323–343 (LIAAIIGAVQIAIIVAIVMCI) traverse the membrane as a helical segment. The Cytoplasmic segment spans residues 344–372 (TRKCPKNNRGRRQKQNLGHFTSDTSSRMV). Residues 351–372 (NRGRRQKQNLGHFTSDTSSRMV) form a disordered region. Residues 358–372 (QNLGHFTSDTSSRMV) are compositionally biased toward polar residues.

The protein belongs to the tomoregulin family. As to quaternary structure, may interact with ST14. In terms of tissue distribution, maily expressed in neurons. Expressed in brain, neurointermediate lobe, pars distalis, pancreas, ovary and testis.

It localises to the cell membrane. Its function is as follows. Neuron-specific restriction factor that prevents herpes simplex virus 1 (HHV-1) infection in the brain by blocking viral entry. Also able to restrict herpes simplex virus 2 (HHV-2) infection, although to a lesser extent. Acts by preventing the association between the viral glycoprotein D (gD) and its cell surface receptor NECTIN1, thereby inhibiting fusion of the virus and the cell membrane. Also able to prevent the association between the viral glycoprotein B (gB) and MYH9/NMMHC-IIA and MYH10/NMMHC-IIB receptors. The sequence is that of Tomoregulin-1 from Mus musculus (Mouse).